The primary structure comprises 338 residues: D-erythrose-4-phosphate dehydrogenase (338 aa).

11 to 12 (RI) is an NAD(+) binding site. Residues 153–155 (SCT), arginine 199, 212–213 (TK), and arginine 235 contribute to the substrate site. Cysteine 154 (nucleophile) is an active-site residue. NAD(+) is bound at residue asparagine 317.

This sequence belongs to the glyceraldehyde-3-phosphate dehydrogenase family. Epd subfamily. As to quaternary structure, homotetramer.

Its subcellular location is the cytoplasm. It carries out the reaction D-erythrose 4-phosphate + NAD(+) + H2O = 4-phospho-D-erythronate + NADH + 2 H(+). The protein operates within cofactor biosynthesis; pyridoxine 5'-phosphate biosynthesis; pyridoxine 5'-phosphate from D-erythrose 4-phosphate: step 1/5. In terms of biological role, catalyzes the NAD-dependent conversion of D-erythrose 4-phosphate to 4-phosphoerythronate. The polypeptide is D-erythrose-4-phosphate dehydrogenase (Shewanella oneidensis (strain ATCC 700550 / JCM 31522 / CIP 106686 / LMG 19005 / NCIMB 14063 / MR-1)).